A 491-amino-acid polypeptide reads, in one-letter code: Cobyric acid synthase (491 aa).

The GATase cobBQ-type domain occupies 246 to 432 (RKLIACPILP…VHGLLADAEL (187 aa)). Catalysis depends on Cys328, which acts as the Nucleophile. Residue His424 is part of the active site.

Belongs to the CobB/CobQ family. CobQ subfamily.

It participates in cofactor biosynthesis; adenosylcobalamin biosynthesis. In terms of biological role, catalyzes amidations at positions B, D, E, and G on adenosylcobyrinic A,C-diamide. NH(2) groups are provided by glutamine, and one molecule of ATP is hydrogenolyzed for each amidation. This Novosphingobium aromaticivorans (strain ATCC 700278 / DSM 12444 / CCUG 56034 / CIP 105152 / NBRC 16084 / F199) protein is Cobyric acid synthase.